The primary structure comprises 50 residues: MDNEIIIIVIVIIIFFFYLKQKKLTNCETQVVKVQKDIDEINLKLKKLNK.

A helical transmembrane segment spans residues 5–19 (IIIIVIVIIIFFFYL). Residues 19–50 (LKQKKLTNCETQVVKVQKDIDEINLKLKKLNK) are a coiled coil.

Its subcellular location is the membrane. This is an uncharacterized protein from Acheta domesticus (House cricket).